A 928-amino-acid polypeptide reads, in one-letter code: Heme/hemopexin-binding protein (928 aa).

A signal peptide spans 1 to 21 (MYKLNVISLIILTTCSGAAYA). 10 repeat units span residues 101–106 (NGKVYL), 149–154 (KDRQVL), 155–160 (KEGLVL), 161–166 (KDGQVV), 167–172 (KEGQVI), 205–210 (NGKVYL), 279–284 (NGKVVL), 410–415 (NGKVNL), 635–640 (NGFVHL), and 674–679 (NGKVSM). Positions 101–679 (NGKVYLANPN…RLGMNGKVSM (579 aa)) are 6 X 6 AA approximate repeats. Residues 149–172 (KDRQVLKEGLVLKDGQVVKEGQVI) form a 4 X 6 AA approximate tandem repeats region.

Its subcellular location is the secreted. In terms of biological role, binds heme/hemopexin complexes. The polypeptide is Heme/hemopexin-binding protein (hxuA) (Haemophilus influenzae).